The chain runs to 120 residues: NAD(P)H-quinone oxidoreductase subunit 3 (120 aa).

3 consecutive transmembrane segments (helical) span residues 6 to 26 (GYDA…LALV), 64 to 84 (MFAL…PWAV), and 89 to 109 (LGLL…VALA).

It belongs to the complex I subunit 3 family. As to quaternary structure, NDH-1 can be composed of about 15 different subunits; different subcomplexes with different compositions have been identified which probably have different functions.

It is found in the cellular thylakoid membrane. The enzyme catalyses a plastoquinone + NADH + (n+1) H(+)(in) = a plastoquinol + NAD(+) + n H(+)(out). It carries out the reaction a plastoquinone + NADPH + (n+1) H(+)(in) = a plastoquinol + NADP(+) + n H(+)(out). NDH-1 shuttles electrons from an unknown electron donor, via FMN and iron-sulfur (Fe-S) centers, to quinones in the respiratory and/or the photosynthetic chain. The immediate electron acceptor for the enzyme in this species is believed to be plastoquinone. Couples the redox reaction to proton translocation, and thus conserves the redox energy in a proton gradient. Cyanobacterial NDH-1 also plays a role in inorganic carbon-concentration. This Synechococcus sp. (strain CC9902) protein is NAD(P)H-quinone oxidoreductase subunit 3.